A 499-amino-acid polypeptide reads, in one-letter code: L-arabinose isomerase (499 aa).

Mn(2+) contacts are provided by Glu306, Glu333, His350, and His449.

Belongs to the arabinose isomerase family. The cofactor is Mn(2+).

The enzyme catalyses beta-L-arabinopyranose = L-ribulose. The protein operates within carbohydrate degradation; L-arabinose degradation via L-ribulose; D-xylulose 5-phosphate from L-arabinose (bacterial route): step 1/3. Its function is as follows. Catalyzes the conversion of L-arabinose to L-ribulose. This Aeromonas salmonicida (strain A449) protein is L-arabinose isomerase.